Reading from the N-terminus, the 370-residue chain is Dihydroorotate dehydrogenase (quinone) (370 aa).

FMN-binding positions include 67-71 (AGFDK) and T91. Residue K71 participates in substrate binding. 116–120 (NRMGF) serves as a coordination point for substrate. Residues N146 and N179 each coordinate FMN. N179 contributes to the substrate binding site. S182 (nucleophile) is an active-site residue. N184 serves as a coordination point for substrate. FMN contacts are provided by K222 and T250. 251 to 252 (NT) contacts substrate. Residues G276, G305, and 326–327 (YS) each bind FMN.

This sequence belongs to the dihydroorotate dehydrogenase family. Type 2 subfamily. In terms of assembly, monomer. It depends on FMN as a cofactor.

The protein resides in the cell membrane. It catalyses the reaction (S)-dihydroorotate + a quinone = orotate + a quinol. The protein operates within pyrimidine metabolism; UMP biosynthesis via de novo pathway; orotate from (S)-dihydroorotate (quinone route): step 1/1. Catalyzes the conversion of dihydroorotate to orotate with quinone as electron acceptor. In Streptomyces griseus subsp. griseus (strain JCM 4626 / CBS 651.72 / NBRC 13350 / KCC S-0626 / ISP 5235), this protein is Dihydroorotate dehydrogenase (quinone).